The following is a 450-amino-acid chain: Interferon-induced protein 75 (450 aa).

An HSR domain is found at 1–108 (MFTLTKALEK…IFRSFRNVGY (108 aa)). 2 disordered regions span residues 131 to 156 (CSLQ…APRV) and 170 to 225 (LDEQ…VKDD). Over residues 143-154 (QLSLPSHLSSAP) the composition is skewed to low complexity. Phosphoserine occurs at positions 175 and 177. A compositionally biased stretch (basic and acidic residues) spans 197-212 (SRDHQRKDKEDSREMP). Ser226 is modified (phosphoserine). 2 disordered regions span residues 238 to 283 (VLCT…HGVQ) and 318 to 360 (AQTS…KNDA). Positions 245-267 (KKARRKKRLNWSNSKRGRQKKKP) are enriched in basic residues. Positions 251-266 (KRLNWSNSKRGRQKKK) match the Nuclear localization signal motif. Polar residues predominate over residues 343 to 353 (TSTAGKTTQVP). One can recognise an SAND domain in the interval 358–439 (NDAVDFLSPT…RQLEQKGLLF (82 aa)).

The protein resides in the nucleus. The sequence is that of Interferon-induced protein 75 (Ifi75) from Mus caroli (Ryukyu mouse).